A 432-amino-acid chain; its full sequence is Trigger factor (432 aa).

The 86-residue stretch at 161-246 (GTRATINFVG…VVKVEARELP (86 aa)) folds into the PPIase FKBP-type domain.

This sequence belongs to the FKBP-type PPIase family. Tig subfamily.

The protein localises to the cytoplasm. The catalysed reaction is [protein]-peptidylproline (omega=180) = [protein]-peptidylproline (omega=0). Its function is as follows. Involved in protein export. Acts as a chaperone by maintaining the newly synthesized protein in an open conformation. Functions as a peptidyl-prolyl cis-trans isomerase. The chain is Trigger factor from Aliivibrio fischeri (strain MJ11) (Vibrio fischeri).